The sequence spans 337 residues: Annexin E1 (337 aa).

Annexin repeat units follow at residues T10 to K80, P81 to T154, D161 to D238, and D242 to E312.

Belongs to the annexin family.

It localises to the cell projection. It is found in the cilium. The protein resides in the flagellum. Functionally, may function as a calcium-regulated structural element linking phospholipid bilayer and underlying axoneme. This Giardia intestinalis (Giardia lamblia) protein is Annexin E1 (ANXE1).